The primary structure comprises 59 residues: UPF0434 protein VIBHAR_01537 (59 aa).

The protein belongs to the UPF0434 family.

The sequence is that of UPF0434 protein VIBHAR_01537 from Vibrio campbellii (strain ATCC BAA-1116).